A 376-amino-acid polypeptide reads, in one-letter code: tRNA-specific 2-thiouridylase MnmA (376 aa).

ATP-binding positions include 9 to 16 and methionine 35; that span reads AMSGGIDS. Residue cysteine 105 is the Nucleophile of the active site. A disulfide bridge links cysteine 105 with cysteine 202. Glycine 129 serves as a coordination point for ATP. Residues 151–153 form an interaction with tRNA region; sequence KDQ. The active-site Cysteine persulfide intermediate is the cysteine 202. Residues 312 to 313 form an interaction with tRNA region; it reads RY.

The protein belongs to the MnmA/TRMU family.

Its subcellular location is the cytoplasm. It carries out the reaction S-sulfanyl-L-cysteinyl-[protein] + uridine(34) in tRNA + AH2 + ATP = 2-thiouridine(34) in tRNA + L-cysteinyl-[protein] + A + AMP + diphosphate + H(+). Catalyzes the 2-thiolation of uridine at the wobble position (U34) of tRNA, leading to the formation of s(2)U34. The sequence is that of tRNA-specific 2-thiouridylase MnmA from Amoebophilus asiaticus (strain 5a2).